Consider the following 1203-residue polypeptide: DNA-directed RNA polymerase subunit beta' (1203 aa).

Residues cysteine 60, cysteine 62, cysteine 75, and cysteine 78 each contribute to the Zn(2+) site. Positions 449, 451, and 453 each coordinate Mg(2+). Zn(2+)-binding residues include cysteine 818, cysteine 892, cysteine 899, and cysteine 902.

Belongs to the RNA polymerase beta' chain family. In terms of assembly, the RNAP catalytic core consists of 2 alpha, 1 beta, 1 beta' and 1 omega subunit. When a sigma factor is associated with the core the holoenzyme is formed, which can initiate transcription. The cofactor is Mg(2+). Zn(2+) is required as a cofactor.

The enzyme catalyses RNA(n) + a ribonucleoside 5'-triphosphate = RNA(n+1) + diphosphate. Functionally, DNA-dependent RNA polymerase catalyzes the transcription of DNA into RNA using the four ribonucleoside triphosphates as substrates. This Bacillus cereus (strain ATCC 10987 / NRS 248) protein is DNA-directed RNA polymerase subunit beta'.